The following is a 179-amino-acid chain: MKHKNGFNPLSRTTAHRRALHRNMVTSLFKYERITTTKQKAMEVRRTAEKLITRSKVDTFNNRRHAAKYIWDDDIVKKLFSDIGPRMKDRNGGYTRILKIGFREGDAADVAILELVDYDFEKKEKDTKKKDDSKKSDDKKTSKKEAGFKSSKGESEHKKNTDQVVDSSSNRRYNRVKGS.

Positions Lys-123–Thr-161 are enriched in basic and acidic residues. A disordered region spans residues Lys-123–Ser-179. Positions Asp-162 to Arg-171 are enriched in polar residues.

It belongs to the bacterial ribosomal protein bL17 family. Part of the 50S ribosomal subunit. Contacts protein L32.

This is Large ribosomal subunit protein bL17 from Treponema denticola (strain ATCC 35405 / DSM 14222 / CIP 103919 / JCM 8153 / KCTC 15104).